Reading from the N-terminus, the 830-residue chain is WD repeat-containing protein 75 (830 aa).

9 WD repeats span residues 4–43 (EENI…KVYS), 47–86 (EECV…KLWD), 90–131 (GILI…QLVS), 145–184 (KELS…YFFK), 193–231 (LSSS…RLWR), 237–276 (KKYT…VEWR), 279–318 (TEKN…IIIH), 324–362 (SAVI…QFYS), and 376–423 (QQEY…KLWM). A Glycyl lysine isopeptide (Lys-Gly) (interchain with G-Cter in SUMO2) cross-link involves residue Lys123. Lys427 participates in a covalent cross-link: Glycyl lysine isopeptide (Lys-Gly) (interchain with G-Cter in SUMO2). WD repeat units follow at residues 430–474 (GFIL…KVWI), 487–525 (GWTC…TIWD), 529–569 (WELK…CCWN), and 574–611 (ALEW…FVFK). At Lys466 the chain carries N6-acetyllysine. Phosphoserine is present on residues Ser664 and Ser672. Lys676 is covalently cross-linked (Glycyl lysine isopeptide (Lys-Gly) (interchain with G-Cter in SUMO2)). The tract at residues 763-806 (SAKEIPEDVDMEEEKESEDSDEENDFTEKVQDTSNTGLGEDIIH) is disordered. The span at 769 to 787 (EDVDMEEEKESEDSDEEND) shows a compositional bias: acidic residues. A phosphoserine mark is found at Ser779, Ser782, Ser796, and Ser811.

In terms of assembly, component of the proposed t-UTP subcomplex of the ribosomal small subunit (SSU) processome. SSU processome is composed of more than 70 proteins and the RNA chaperone small nucleolar RNA (snoRNA) U3.

It is found in the nucleus. The protein localises to the nucleolus. Functionally, ribosome biogenesis factor. Part of the small subunit (SSU) processome, first precursor of the small eukaryotic ribosomal subunit. During the assembly of the SSU processome in the nucleolus, many ribosome biogenesis factors, an RNA chaperone and ribosomal proteins associate with the nascent pre-rRNA and work in concert to generate RNA folding, modifications, rearrangements and cleavage as well as targeted degradation of pre-ribosomal RNA by the RNA exosome. Involved in nucleolar processing of pre-18S ribosomal RNA. Required for optimal pre-ribosomal RNA transcription by RNA polymerase I. This Homo sapiens (Human) protein is WD repeat-containing protein 75.